Here is a 213-residue protein sequence, read N- to C-terminus: UPF0502 protein Daro_2469 (213 aa).

The protein belongs to the UPF0502 family.

The chain is UPF0502 protein Daro_2469 from Dechloromonas aromatica (strain RCB).